The chain runs to 432 residues: Adenosylhomocysteinase (432 aa).

At serine 2 the chain carries N-acetylserine. Positions 57, 131, and 156 each coordinate substrate. 157 to 159 (TTT) contributes to the NAD(+) binding site. At serine 183 the chain carries Phosphoserine. Substrate is bound by residues lysine 186 and aspartate 190. N6-(2-hydroxyisobutyryl)lysine is present on lysine 186. Tyrosine 193 is modified (phosphotyrosine). Residues 222-227 (GDVGKG), glutamate 243, asparagine 248, 299-301 (IGH), asparagine 346, and histidine 353 contribute to the NAD(+) site.

The protein belongs to the adenosylhomocysteinase family. In terms of assembly, homotetramer. Interaction with AHCYL1. NAD(+) is required as a cofactor.

The protein localises to the cytoplasm. Its subcellular location is the melanosome. It is found in the nucleus. The protein resides in the endoplasmic reticulum. It catalyses the reaction S-adenosyl-L-homocysteine + H2O = L-homocysteine + adenosine. It functions in the pathway amino-acid biosynthesis; L-homocysteine biosynthesis; L-homocysteine from S-adenosyl-L-homocysteine: step 1/1. Catalyzes the hydrolysis of S-adenosyl-L-homocysteine to form adenosine and homocysteine. Binds copper ions. The sequence is that of Adenosylhomocysteinase (AHCY) from Homo sapiens (Human).